A 60-amino-acid polypeptide reads, in one-letter code: Cytochrome c oxidase subunit 9, mitochondrial (60 aa).

Topologically, residues 1-15 (MSAIAPITGTIRKRI) are mitochondrial matrix. The chain crosses the membrane as a helical span at residues 16-38 (LADITIGFAIGGAMASYWWWGFH). At 39–57 (KNIINKREAYYAKLAEQKA) the chain is on the mitochondrial intermembrane side. Residues 58–60 (AEN) constitute a propeptide, removed in mature form.

Belongs to the fungal cytochrome c oxidase subunit 7a family. In terms of assembly, component of the cytochrome c oxidase (complex IV, CIV), a multisubunit enzyme composed of a catalytic core of 3 subunits and several supernumerary subunits. The complex exists as a monomer or a dimer and forms supercomplexes (SCs) in the inner mitochondrial membrane with ubiquinol-cytochrome c oxidoreductase (cytochrome b-c1 complex, complex III, CIII).

It localises to the mitochondrion inner membrane. It participates in energy metabolism; oxidative phosphorylation. Component of the cytochrome c oxidase, the last enzyme in the mitochondrial electron transport chain which drives oxidative phosphorylation. The respiratory chain contains 3 multisubunit complexes succinate dehydrogenase (complex II, CII), ubiquinol-cytochrome c oxidoreductase (cytochrome b-c1 complex, complex III, CIII) and cytochrome c oxidase (complex IV, CIV), that cooperate to transfer electrons derived from NADH and succinate to molecular oxygen, creating an electrochemical gradient over the inner membrane that drives transmembrane transport and the ATP synthase. Cytochrome c oxidase is the component of the respiratory chain that catalyzes the reduction of oxygen to water. Electrons originating from reduced cytochrome c in the intermembrane space (IMS) are transferred via the dinuclear copper A center (CU(A)) of subunit 2 and heme A of subunit 1 to the active site in subunit 1, a binuclear center (BNC) formed by heme A3 and copper B (CU(B)). The BNC reduces molecular oxygen to 2 water molecules using 4 electrons from cytochrome c in the IMS and 4 protons from the mitochondrial matrix. The chain is Cytochrome c oxidase subunit 9, mitochondrial (COX9) from Kluyveromyces lactis (strain ATCC 8585 / CBS 2359 / DSM 70799 / NBRC 1267 / NRRL Y-1140 / WM37) (Yeast).